The sequence spans 96 residues: (4S)-4-hydroxy-5-phosphonooxypentane-2,3-dione isomerase (96 aa).

The 90-residue stretch at 2-91 folds into the ABM domain; the sequence is HVTLVEINVH…MTGPRKKRLF (90 aa).

Belongs to the LsrG family. Homodimer.

The protein localises to the cytoplasm. It carries out the reaction (2S)-2-hydroxy-3,4-dioxopentyl phosphate = 3-hydroxy-2,4-dioxopentyl phosphate. Its function is as follows. Involved in the degradation of phospho-AI-2, thereby terminating induction of the lsr operon and closing the AI-2 signaling cycle. Catalyzes the conversion of (4S)-4-hydroxy-5-phosphonooxypentane-2,3-dione (P-DPD) to 3-hydroxy-5-phosphonooxypentane-2,4-dione (P-HPD). The sequence is that of (4S)-4-hydroxy-5-phosphonooxypentane-2,3-dione isomerase from Shigella flexneri serotype 5b (strain 8401).